The chain runs to 119 residues: Ribonuclease P protein component (119 aa).

Belongs to the RnpA family. Consists of a catalytic RNA component (M1 or rnpB) and a protein subunit.

It catalyses the reaction Endonucleolytic cleavage of RNA, removing 5'-extranucleotides from tRNA precursor.. RNaseP catalyzes the removal of the 5'-leader sequence from pre-tRNA to produce the mature 5'-terminus. It can also cleave other RNA substrates such as 4.5S RNA. The protein component plays an auxiliary but essential role in vivo by binding to the 5'-leader sequence and broadening the substrate specificity of the ribozyme. This Pediococcus pentosaceus (strain ATCC 25745 / CCUG 21536 / LMG 10740 / 183-1w) protein is Ribonuclease P protein component.